Reading from the N-terminus, the 345-residue chain is Type II restriction enzyme HgiCI (345 aa).

The catalysed reaction is Endonucleolytic cleavage of DNA to give specific double-stranded fragments with terminal 5'-phosphates.. A P subtype restriction enzyme that recognizes the double-stranded sequence 5'-GGYRCC-3' and cleaves after G-1. The chain is Type II restriction enzyme HgiCI (hgiCIR) from Herpetosiphon aurantiacus (Herpetosiphon giganteus).